A 367-amino-acid polypeptide reads, in one-letter code: Germination protease (367 aa).

Residues 1–15 (MKEPLDLSKYSVRTD) constitute a propeptide that is removed on maturation.

This sequence belongs to the peptidase A25 family. As to quaternary structure, homotetramer. In terms of processing, autoproteolytically processed. The inactive tetrameric zymogen termed p46 autoprocesses to a smaller form termed p41, which is active only during spore germination.

It carries out the reaction Endopeptidase action with P4 Glu or Asp, P1 preferably Glu &gt; Asp, P1' hydrophobic and P2' Ala.. In terms of biological role, initiates the rapid degradation of small, acid-soluble proteins during spore germination. In Bacillus cereus (strain G9842), this protein is Germination protease.